The chain runs to 504 residues: Amidophosphoribosyltransferase (504 aa).

Catalysis depends on C2, which acts as the Nucleophile. The region spanning C2 to E235 is the Glutamine amidotransferase type-2 domain. 3 residues coordinate Mg(2+): T305, D367, and D368.

The protein in the C-terminal section; belongs to the purine/pyrimidine phosphoribosyltransferase family. Mg(2+) is required as a cofactor.

It carries out the reaction 5-phospho-beta-D-ribosylamine + L-glutamate + diphosphate = 5-phospho-alpha-D-ribose 1-diphosphate + L-glutamine + H2O. Its pathway is purine metabolism; IMP biosynthesis via de novo pathway; N(1)-(5-phospho-D-ribosyl)glycinamide from 5-phospho-alpha-D-ribose 1-diphosphate: step 1/2. Its function is as follows. Catalyzes the formation of phosphoribosylamine from phosphoribosylpyrophosphate (PRPP) and glutamine. This chain is Amidophosphoribosyltransferase, found in Pasteurella multocida (strain Pm70).